The sequence spans 160 residues: Transcription antitermination protein NusB (160 aa).

Belongs to the NusB family.

In terms of biological role, involved in transcription antitermination. Required for transcription of ribosomal RNA (rRNA) genes. Binds specifically to the boxA antiterminator sequence of the ribosomal RNA (rrn) operons. This Sinorhizobium medicae (strain WSM419) (Ensifer medicae) protein is Transcription antitermination protein NusB.